The chain runs to 971 residues: E3 ubiquitin-protein ligase MIB2 (971 aa).

The region spanning 1–80 (MDLDPHAGVQ…AHDLLLYDNA (80 aa)) is the MIB/HERC2 1 domain. Residues 86 to 138 (HPNIICDCCKKHGLRGMRWKCRVCFDYDLCTQCYMHNKHDLTHAFERYETSHS) form a ZZ-type zinc finger. Zn(2+)-binding residues include cysteine 91, cysteine 94, cysteine 106, cysteine 109, cysteine 115, cysteine 118, histidine 124, and histidine 128. An MIB/HERC2 2 domain is found at 149-227 (LPRIPLRGIF…KVDLKCVGEA (79 aa)). The residue at position 251 (serine 251) is a Phosphoserine. ANK repeat units lie at residues 478-507 (QGRTALQVAAYLGQVELVRLLLQARASVDL), 511-540 (EGNTALHYTAMGNQPEATRLLLSAGCGVDA), 544-573 (TRSTALHVAVQRGFLEVVKILCEHGCDVNL), 577-609 (HADTPLHSAISAGAGASSIVEVLTEVPGIDVTA), 613-642 (QGFTLLHHASLKGHVLAVRKILARARQLVD), 647-677 (DGFTALHLAALNNHREVAQVLIREGRCDVNV), 681-710 (KLQSPLHLAVQQAHLGLVPLLVDAGCNVNT), 714-742 (EGDTALHVALQRHQLLPLVADRAGGDPGP), and 783-812 (RGRSPLDLATEGRVLKALQGCAQRFRERQA). 2 consecutive RING-type zinc fingers follow at residues 848–883 (CLVCSELALLVLFSPCQHRTVCEECARRMKKCIRCQ) and 927–960 (CPICIDSHIRLVFQCGHGACAPCGAALNACPICR).

As to quaternary structure, interacts with actin monomer. Post-translationally, ubiquitinated. Possibly via autoubiquitination.

Its subcellular location is the cytoplasm. It localises to the endosome. The enzyme catalyses S-ubiquitinyl-[E2 ubiquitin-conjugating enzyme]-L-cysteine + [acceptor protein]-L-lysine = [E2 ubiquitin-conjugating enzyme]-L-cysteine + N(6)-ubiquitinyl-[acceptor protein]-L-lysine.. The protein operates within protein modification; protein ubiquitination. Its function is as follows. E3 ubiquitin-protein ligase that mediates ubiquitination of Delta receptors, which act as ligands of Notch proteins. Positively regulates the Delta-mediated Notch signaling by ubiquitinating the intracellular domain of Delta, leading to endocytosis of Delta receptors. This Rattus norvegicus (Rat) protein is E3 ubiquitin-protein ligase MIB2 (Mib2).